Reading from the N-terminus, the 303-residue chain is Pseudouridine-5'-phosphate glycosidase (303 aa).

The active-site Proton donor is glutamate 24. Lysine 85 and valine 105 together coordinate substrate. Aspartate 137 contacts Mn(2+). 139–141 serves as a coordination point for substrate; the sequence is SAD. Lysine 158 acts as the Nucleophile in catalysis.

This sequence belongs to the pseudouridine-5'-phosphate glycosidase family. As to quaternary structure, homotrimer. The cofactor is Mn(2+).

It carries out the reaction D-ribose 5-phosphate + uracil = psi-UMP + H2O. Catalyzes the reversible cleavage of pseudouridine 5'-phosphate (PsiMP) to ribose 5-phosphate and uracil. Functions biologically in the cleavage direction, as part of a pseudouridine degradation pathway. This chain is Pseudouridine-5'-phosphate glycosidase, found in Herpetosiphon aurantiacus (strain ATCC 23779 / DSM 785 / 114-95).